The sequence spans 420 residues: Cyclin-B2-1 (420 aa).

Residues 1 to 61 (MDRASENRRL…EKSGKEEQKP (61 aa)) form a disordered region. Positions 49–60 (PMLEKSGKEEQK) are enriched in basic and acidic residues.

The protein belongs to the cyclin family. Cyclin AB subfamily. In terms of assembly, interacts with CDKB2-1. As to expression, expressed in the root apices.

Its function is as follows. Involved in the control of the cell cycle at the G2/M (mitosis) transition. May activate CDKB2-1 kinase. This chain is Cyclin-B2-1 (CYCB2-1), found in Oryza sativa subsp. japonica (Rice).